A 309-amino-acid polypeptide reads, in one-letter code: Haloalkane dehalogenase (309 aa).

The AB hydrolase-1 domain maps to 37–148 (PTVLFLHGNP…FERWEDFHQR (112 aa)). The Nucleophile role is filled by Asp-110. Glu-134 serves as the catalytic Proton donor. Catalysis depends on His-278, which acts as the Proton acceptor.

It belongs to the haloalkane dehalogenase family. Type 2 subfamily. In terms of assembly, monomer.

The catalysed reaction is 1-haloalkane + H2O = a halide anion + a primary alcohol + H(+). Its function is as follows. Catalyzes hydrolytic cleavage of carbon-halogen bonds in halogenated aliphatic compounds, leading to the formation of the corresponding primary alcohols, halide ions and protons. The chain is Haloalkane dehalogenase from Mesorhizobium japonicum (strain LMG 29417 / CECT 9101 / MAFF 303099) (Mesorhizobium loti (strain MAFF 303099)).